Here is a 267-residue protein sequence, read N- to C-terminus: tRNA pseudouridine synthase A (267 aa).

Catalysis depends on aspartate 53, which acts as the Nucleophile. Position 114 (tyrosine 114) interacts with substrate.

The protein belongs to the tRNA pseudouridine synthase TruA family. In terms of assembly, homodimer.

It catalyses the reaction uridine(38/39/40) in tRNA = pseudouridine(38/39/40) in tRNA. Formation of pseudouridine at positions 38, 39 and 40 in the anticodon stem and loop of transfer RNAs. The chain is tRNA pseudouridine synthase A from Chlamydia trachomatis serovar L2b (strain UCH-1/proctitis).